The following is a 433-amino-acid chain: Homogentisate 1,2-dioxygenase (433 aa).

The Proton acceptor role is filled by H288. Fe cation contacts are provided by H331 and E337. Residues Y346 and H367 each contribute to the homogentisate site. Position 367 (H367) interacts with Fe cation.

This sequence belongs to the homogentisate dioxygenase family. Hexamer; dimer of trimers. It depends on Fe cation as a cofactor.

It catalyses the reaction homogentisate + O2 = 4-maleylacetoacetate + H(+). The protein operates within amino-acid degradation; L-phenylalanine degradation; acetoacetate and fumarate from L-phenylalanine: step 4/6. Involved in the catabolism of homogentisate (2,5-dihydroxyphenylacetate or 2,5-OH-PhAc), a central intermediate in the degradation of phenylalanine and tyrosine. Catalyzes the oxidative ring cleavage of the ar omatic ring of 2,5-dihydroxyphenylacetate to yield maleylacetoacetate. The polypeptide is Homogentisate 1,2-dioxygenase (Pseudomonas putida (strain ATCC 47054 / DSM 6125 / CFBP 8728 / NCIMB 11950 / KT2440)).